Reading from the N-terminus, the 528-residue chain is MKPNLKQWKQLMLFGIFAWGLLFLVIFIYFTDSNSAEPVPSSFSYIETKRLLPLQGKQRVIMGAIHDPSFSEAIDGNEVLLNEDLLDTFKSETGSIKKWTDLEDAFRSEDEFFPSQIGRKSKSAFYQVNDDYLFAAGQPMSHNSFQEIAKFISADEDNPKESILQNNWSRQRRMRRRSTKHRRSQMLDESDDWDGLYSTMSKSFLYKLWKGDVSSKMLNPRLQKAMKDYLSTNKHGVRFKGKRNSKLTGDQLFCELKERVDVKTIDGKEAPFSTLGWEKHVPQIPLGKLYTHGFGSCAVVMSAGAILNSSLGDEIDSHDAVLRFNSAPTRGYEKDVGNKTTMRIINSQILTNPNHHFVDSSLYKDVILVAWDPAPYSANLNWYKKPDYNLFTPYVQHRKKNPNQPFYILHPKFIWQLWDIIQENTKEKIQPNPPSSGFIGILIMMSMCNEVHVYEYIPSVRQTDLCHYHELYYDAACTLGAYHPLLYEKLLVQRMNKGLQDDLYRKGKVILPGFKSVKCPERNNFPPL.

The Cytoplasmic portion of the chain corresponds to 1–10; it reads MKPNLKQWKQ. The chain crosses the membrane as a helical; Signal-anchor for type II membrane protein span at residues 11-31; the sequence is LMLFGIFAWGLLFLVIFIYFT. The Lumenal portion of the chain corresponds to 32 to 528; it reads DSNSAEPVPS…CPERNNFPPL (497 aa). N-linked (GlcNAc...) asparagine glycosylation is found at Asn-167, Asn-308, and Asn-338. Disulfide bonds link Cys-254–Cys-519, Cys-297–Cys-448, and Cys-466–Cys-477.

Belongs to the glycosyltransferase 29 family.

It is found in the golgi apparatus. Its subcellular location is the golgi stack membrane. It carries out the reaction a beta-D-galactoside + CMP-N-acetyl-beta-neuraminate = an N-acetyl-alpha-neuraminyl-(2-&gt;6)-beta-D-galactosyl derivative + CMP + H(+). Its function is as follows. Transfers sialic acid from the donor of substrate CMP-sialic acid to galactose containing acceptor substrates. The sequence is that of Beta-galactoside alpha-2,6-sialyltransferase 2 (ST6GAL2) from Gallus gallus (Chicken).